A 472-amino-acid chain; its full sequence is Acetyl-CoA decarbonylase/synthase complex subunit beta 2 (472 aa).

Cysteine 189, cysteine 192, cysteine 278, and cysteine 280 together coordinate [Ni-Fe-S] cluster.

It belongs to the CdhC family. As to quaternary structure, monomer. The ACDS complex is made up of alpha, epsilon, beta, gamma and delta chains with a probable stoichiometry of (alpha(2)epsilon(2))(4)-beta(8)-(gamma(1)delta(1))(8) (Potential). Requires [Ni-Fe-S] cluster as cofactor.

It catalyses the reaction Co(I)-[corrinoid Fe-S protein] + acetyl-CoA + H(+) = methyl-Co(III)-[corrinoid Fe-S protein] + CO + CoA. It functions in the pathway one-carbon metabolism; methanogenesis from acetate. In terms of biological role, part of a complex that catalyzes the reversible cleavage of acetyl-CoA, allowing growth on acetate as sole source of carbon and energy. The alpha-epsilon complex generates CO from CO(2), while the beta subunit (this protein) combines the CO with CoA and a methyl group to form acetyl-CoA. The methyl group, which is incorporated into acetyl-CoA, is transferred to the beta subunit by a corrinoid iron-sulfur protein (the gamma-delta complex). The protein is Acetyl-CoA decarbonylase/synthase complex subunit beta 2 (cdhC2) of Methanosarcina thermophila.